A 138-amino-acid polypeptide reads, in one-letter code: Glutaredoxin-like protein C5orf63 (138 aa).

Cysteine 41 and cysteine 44 form a disulfide bridge. Over residues 55–64 (ENRQPYKDQK) the composition is skewed to basic and acidic residues. The interval 55–88 (ENRQPYKDQKLPGTRRRRSPSSPSHPHMASQSGK) is disordered.

Belongs to the glutaredoxin family. YDR286C subfamily.

The polypeptide is Glutaredoxin-like protein C5orf63 (C5orf63) (Homo sapiens (Human)).